The chain runs to 32 residues: MSDIN-like toxin proprotein 1 (32 aa).

The propeptide occupies 1–10 (MSDINATRLP). The cyclopeptide (Ile-Pro) cross-link spans 11–18 (IFWFIYFP). A propeptide spanning residues 19–32 (CVSDVDSTLTRGER) is cleaved from the precursor.

The protein belongs to the MSDIN fungal toxin family. In terms of processing, processed by the macrocyclase-peptidase enzyme POPB to yield a toxic cyclic octapeptide. POPB first removes 10 residues from the N-terminus. Conformational trapping of the remaining peptide forces the enzyme to release this intermediate rather than proceed to macrocyclization. The enzyme rebinds the remaining peptide in a different conformation and catalyzes macrocyclization of the N-terminal 8 residues. As to expression, expressed in basidiocarps.

Probable toxin that belongs to the MSDIN-like toxin family responsible for a large number of food poisoning cases and deaths. The protein is MSDIN-like toxin proprotein 1 of Amanita exitialis (Guangzhou destroying angel).